The primary structure comprises 325 residues: Glutarate 2-hydroxylase (325 aa).

Fe cation contacts are provided by His160, Asp162, and His292.

This sequence belongs to the glutarate hydroxylase family. As to quaternary structure, homotetramer. It depends on Fe(2+) as a cofactor.

The enzyme catalyses glutarate + 2-oxoglutarate + O2 = (S)-2-hydroxyglutarate + succinate + CO2. Its pathway is amino-acid degradation. Functionally, acts as an alpha-ketoglutarate-dependent dioxygenase catalyzing hydroxylation of glutarate (GA) to L-2-hydroxyglutarate (L2HG). Functions in a L-lysine degradation pathway that proceeds via cadaverine, glutarate and L-2-hydroxyglutarate. The protein is Glutarate 2-hydroxylase of Citrobacter koseri (strain ATCC BAA-895 / CDC 4225-83 / SGSC4696).